We begin with the raw amino-acid sequence, 99 residues long: Phosphoribosyl-ATP pyrophosphatase (99 aa).

This sequence belongs to the PRA-PH family.

Its subcellular location is the cytoplasm. It carries out the reaction 1-(5-phospho-beta-D-ribosyl)-ATP + H2O = 1-(5-phospho-beta-D-ribosyl)-5'-AMP + diphosphate + H(+). It participates in amino-acid biosynthesis; L-histidine biosynthesis; L-histidine from 5-phospho-alpha-D-ribose 1-diphosphate: step 2/9. This Methanosphaerula palustris (strain ATCC BAA-1556 / DSM 19958 / E1-9c) protein is Phosphoribosyl-ATP pyrophosphatase.